Consider the following 347-residue polypeptide: METPFYGDEALSGLGGGASGSGGSFASPGRLFPGAPPTAAAGSMMKKDALTLSLSEQVAAALKPAAAPPPTPLRADGAPSAAPPDGLLASPDLGLLKLASPELERLIIQSNGLVTTTPTSSQFLYPKVAASEEQEFAEGFVKALEDLHKQNQLGAGAAAAAAAAAAGGPSGTATGSAPPGELAPAAAAPEAPVYANLSSYAGGAGGAGGAATVAFAAEPVPFPPPPPPGALGPPRLAALKDEPQTVPDVPSFGESPPLSPIDMDTQERIKAERKRLRNRIAASKCRKRKLERISRLEEKVKTLKSQNTELASTASLLREQVAQLKQKVLSHVNSGCQLLPQHQVPAY.

Residues 1 to 43 (METPFYGDEALSGLGGGASGSGGSFASPGRLFPGAPPTAAAGS) are disordered. The span at 13–23 (GLGGGASGSGG) shows a compositional bias: gly residues. The Menin-binding motif (MBM) motif lies at 27-39 (SPGRLFPGAPPTA). An MAP kinase docking motif; essential for its phosphorylation motif is present at residues 46 to 55 (KKDALTLSLS). A disordered region spans residues 62–86 (LKPAAAPPPTPLRADGAPSAAPPDG). Over residues 73–86 (LRADGAPSAAPPDG) the composition is skewed to low complexity. A Phosphoserine modification is found at Ser-90. At Ser-100 the chain carries Phosphoserine; by MAPK8. Thr-117 bears the Phosphothreonine mark. The disordered stretch occupies residues 244 to 264 (QTVPDVPSFGESPPLSPIDMD). Ser-251, Ser-255, and Ser-259 each carry phosphoserine. Residues 268–295 (RIKAERKRLRNRIAASKCRKRKLERISR) form a basic motif region. The region spanning 268-331 (RIKAERKRLR…AQLKQKVLSH (64 aa)) is the bZIP domain. Residues 296-324 (LEEKVKTLKSQNTELASTASLLREQVAQL) are leucine-zipper.

This sequence belongs to the bZIP family. Jun subfamily. As to quaternary structure, heterodimer; binds DNA as a heterodimer. Component of an AP-1 transcription factor complex composed of JUN-FOS heterodimers. As part of the AP-1 transcription factor complex, forms heterodimers with FOS proteins, thereby binding to the AP-1 consensus sequence and stimulating transcription. Forms heterodimers with FOSB; thereby binding to the AP-1 consensus sequence. Interacts (via MBM motif) with MEN1; this interaction represses transcriptional activation. Interacts with MAPK10; this interaction is inhibited in the presence of MEN1. In terms of processing, phosphorylated by MAP kinases MAPK8 and MAPK10; phosphorylation is inhibited in the presence of MEN1.

Its subcellular location is the nucleus. Transcription factor binding AP-1 sites. Heterodimerizes with proteins of the FOS family to form an AP-1 transcription factor complex, thereby enhancing their DNA binding activity to an AP-1 consensus sequence 3'-TGA[GC]TCA-5' and enhancing their transcriptional activity. This chain is Transcription factor JunD (JUND), found in Homo sapiens (Human).